The following is a 423-amino-acid chain: Hemoglobinase (423 aa).

An N-terminal signal peptide occupies residues 1 to 18; that stretch reads MFYSIFFIHILRIVLVDC. Residues 19–29 constitute a propeptide that is removed on maturation; that stretch reads NEYSEENVDDR. Residues His145 and Cys186 contribute to the active site. Residues 286–307 are disordered; sequence RKKASTEHDEPPMKPKDSIPSR. The propeptide occupies 286-423; that stretch reads RKKASTEHDE…INGVIRKVCG (138 aa). Residues 289–305 are compositionally biased toward basic and acidic residues; that stretch reads ASTEHDEPPMKPKDSIP.

This sequence belongs to the peptidase C13 family. Gut.

It catalyses the reaction Hydrolysis of proteins and small molecule substrates at -Asn-|-Xaa- bonds.. Functionally, this protease is used by the parasite for degradation of the host globin. This Schistosoma japonicum (Blood fluke) protein is Hemoglobinase (HAEM).